We begin with the raw amino-acid sequence, 334 residues long: Transmembrane protein 41 homolog (334 aa).

The N-linked (GlcNAc...) asparagine glycan is linked to Asn-43. The interval 47-79 is disordered; it reads KNKNNNIDNKKNSNNNNNNNNNNNNKNSISNNN. N-linked (GlcNAc...) asparagine glycosylation occurs at Asn-83. The next 6 membrane-spanning stretches (helical) occupy residues 97–117, 156–176, 192–214, 246–266, 269–289, and 305–325; these read LPLWLLVIVFGVSISVIVFLF, FIVITTFGVIYTFLQAFSIPG, VGFPLVCFVATLGATFSYLISYY, IVFLRITPFLPNWFINLASPL, VPIHTFAIGTFIGIMPATFLA, and IFDLKSILTMAALALLSILPT.

It belongs to the TMEM41 family.

The protein localises to the membrane. In Dictyostelium discoideum (Social amoeba), this protein is Transmembrane protein 41 homolog.